We begin with the raw amino-acid sequence, 201 residues long: Small ribosomal subunit protein uS4 (201 aa).

Positions 91–151 (ARLDNVIYRA…DRSRSMLWFD (61 aa)) constitute an S4 RNA-binding domain.

This sequence belongs to the universal ribosomal protein uS4 family. As to quaternary structure, part of the 30S ribosomal subunit. Contacts protein S5. The interaction surface between S4 and S5 is involved in control of translational fidelity.

Its function is as follows. One of the primary rRNA binding proteins, it binds directly to 16S rRNA where it nucleates assembly of the body of the 30S subunit. Functionally, with S5 and S12 plays an important role in translational accuracy. This Corynebacterium urealyticum (strain ATCC 43042 / DSM 7109) protein is Small ribosomal subunit protein uS4.